The primary structure comprises 439 residues: tRNA-2-methylthio-N(6)-dimethylallyladenosine synthase (439 aa).

Positions 2–119 (KYIYIKTWGC…LPKMIDEVEK (118 aa)) constitute an MTTase N-terminal domain. C11, C48, C82, C156, C160, and C163 together coordinate [4Fe-4S] cluster. The Radical SAM core domain occupies 142 to 374 (KKKGYTADIS…QERINIQTML (233 aa)). Residues 377–439 (RKMFGSIQSV…HTHSLKGELF (63 aa)) form the TRAM domain.

This sequence belongs to the methylthiotransferase family. MiaB subfamily. In terms of assembly, monomer. Requires [4Fe-4S] cluster as cofactor.

The protein resides in the cytoplasm. The enzyme catalyses N(6)-dimethylallyladenosine(37) in tRNA + (sulfur carrier)-SH + AH2 + 2 S-adenosyl-L-methionine = 2-methylsulfanyl-N(6)-dimethylallyladenosine(37) in tRNA + (sulfur carrier)-H + 5'-deoxyadenosine + L-methionine + A + S-adenosyl-L-homocysteine + 2 H(+). Functionally, catalyzes the methylthiolation of N6-(dimethylallyl)adenosine (i(6)A), leading to the formation of 2-methylthio-N6-(dimethylallyl)adenosine (ms(2)i(6)A) at position 37 in tRNAs that read codons beginning with uridine. This is tRNA-2-methylthio-N(6)-dimethylallyladenosine synthase from Buchnera aphidicola subsp. Acyrthosiphon pisum (strain APS) (Acyrthosiphon pisum symbiotic bacterium).